A 43-amino-acid polypeptide reads, in one-letter code: Protein PsbN (43 aa).

Residues 4-24 (ATIIVIFVSSLLLGITAYSIY) traverse the membrane as a helical segment.

This sequence belongs to the PsbN family.

It is found in the plastid. It localises to the chloroplast thylakoid membrane. In terms of biological role, may play a role in photosystem I and II biogenesis. This is Protein PsbN from Trieres chinensis (Marine centric diatom).